The following is a 197-amino-acid chain: C4-dicarboxylate transport transcriptional regulatory protein DctR (197 aa).

In terms of domain architecture, Response regulatory spans 4-120; sequence TVHIVDDEES…HIVDIALSAI (117 aa). Asp53 carries the 4-aspartylphosphate modification. Residues 128-135 are inter-domain linker; the sequence is AEAQAREA. The HTH luxR-type domain occupies 136–197; that stretch reads VAARRASLSA…RNIADLARMT (62 aa). Positions 160-179 form a DNA-binding region, H-T-H motif; the sequence is NKQIAERLGIAMRTVEVHRS.

Post-translationally, phosphorylated by DctS.

The protein resides in the cytoplasm. Its function is as follows. Member of the two-component regulatory system DctS/DctR involved in the transport of C4-dicarboxylates. DctR functions as a transcriptional repressor of genes for C4-dicarboxylate transport. In Rhodobacter capsulatus (Rhodopseudomonas capsulata), this protein is C4-dicarboxylate transport transcriptional regulatory protein DctR (dctR).